We begin with the raw amino-acid sequence, 448 residues long: FAD-linked oxidoreductase nodO (448 aa).

The region spanning 35–206 is the FAD-binding PCMH-type domain; it reads PEHFPLAIVK…IRFFLKTCPL (172 aa).

Belongs to the oxygen-dependent FAD-linked oxidoreductase family. The cofactor is FAD.

The protein operates within secondary metabolite biosynthesis. FAD-linked oxidoreductase; part of the gene cluster that mediates the biosynthesis of the indole diterpenes nodulisporic acids (NA). Nodulisporic acid A (NAA) and its chemically modified derivatives are of particular significance because of their highly potent insecticidal activity against blood-feeding arthropods and lack of observable adverse effects on mammals, in particular the tremogenicity associated with the paspaline-derived IDTs is not observed. The geranylgeranyl diphosphate (GGPP) synthase ggs1, localized outside of the cluster, is proposed to catalyze the first step in nodulisporic acid biosynthesis via conversion of farnesyl pyrophosphate and isopentyl pyrophosphate into geranylgeranyl pyrophosphate (GGPP). Condensation of indole-3-glycerol phosphate with GGPP by the prenyl transferase nodC then forms 3-geranylgeranylindole (3-GGI). Epoxidation by the FAD-dependent monooxygenase nodM leads to a single-epoxidized-GGI that is substrate of the terpene cyclase nodB for cyclization to yield emindole SB. The terminal methyl carbon, C28, of emindole SB is then oxidized by the cytochrome P450 monooxygenase nodW to produce nodulisporic acid F (NAF), the pentacyclic core of NAA. NAF is converted to nodulisporic acid E (NAE) via prenylation. This step is probably performed by one of the indole diterpene prenyltransferases nodD1 or nodD2. Several oxidation steps performed by the FAD-linked oxidoreductase nodO and one of the cytochrome P450 monooxygenase nodR, nodX or nodZ further convert NAE to nodulisporic acid D (NAD). NAD is substrate of cytochrome P450 monooxygenase nodJ to produce the precursor of nodulisporic acid C (NAC), converted to NAC by one of the indole diterpene prenyltransferases nodD1 or nodD2. The FAD-dependent monooxygenase nodY2 then oxidizes NAC to nodulisporic acid B (NAB). Finally NAB is converted to NAA by one of the cytochrome P450 monooxygenases nodR, nodX or nodZ. The chain is FAD-linked oxidoreductase nodO from Hypoxylon pulicicidum.